A 197-amino-acid polypeptide reads, in one-letter code: dTTP/UTP pyrophosphatase (197 aa).

The active-site Proton acceptor is aspartate 70.

This sequence belongs to the Maf family. YhdE subfamily. Requires a divalent metal cation as cofactor.

The protein resides in the cytoplasm. The catalysed reaction is dTTP + H2O = dTMP + diphosphate + H(+). It catalyses the reaction UTP + H2O = UMP + diphosphate + H(+). In terms of biological role, nucleoside triphosphate pyrophosphatase that hydrolyzes dTTP and UTP. May have a dual role in cell division arrest and in preventing the incorporation of modified nucleotides into cellular nucleic acids. The polypeptide is dTTP/UTP pyrophosphatase (yceF2) (Escherichia coli O6:K15:H31 (strain 536 / UPEC)).